Consider the following 707-residue polypeptide: F-box/WD repeat-containing protein 7 (707 aa).

The interval 1–151 (MNQELLSVGS…SVTNSSSIVD (151 aa)) is disordered. Position 26 is a phosphoserine; by ATM (serine 26). Residues 57–68 (GEVVGVEPRPGG) show a composition bias toward low complexity. A compositionally biased stretch (polar residues) spans 69–84 (QNDSQQGQLEENNNRF). The span at 87–129 (VDEDSSGNQEEQEEDEEHAGEQDEEDEEEEEMDQESDDFDQSD) shows a compositional bias: acidic residues. The span at 130–139 (DSSREDEHTH) shows a compositional bias: basic and acidic residues. At threonine 205 the chain carries Phosphothreonine. Phosphoserine; by SGK1 is present on serine 227. Residues 278 to 324 (RDFISLLPKELALYVLSFLEPKDLLQAAQTCRYWRILAEDNLLWREK) form the F-box domain. 7 WD repeats span residues 378–418 (GHDD…RTLV), 420–456 (HTGGVWSSQMRDNIIISGSTDRTLKVWNAETGECIHT), 459–498 (GHTSTVRCMHLHEKRVVSGSRDATLRVWDIETGQCLHVLM), 500–536 (HVAAVRCVQYDGRRVVSGAYDFMVKVWDPETETCLHT), 539–578 (GHTNRVYSLQFDGIHVVSGSLDTSIRVWDVETGNCIHTLT), 580–618 (HQSLTSGMELKDNILVSGNADSTVKIWDIKTGQCLQTLQ), and 622–659 (KHQSAVTCLQFNKNFVITSSDDGTVKLWDLKTGEFIRN).

In terms of assembly, homodimer; homodimerization plays a role in substrate binding and/or ubiquitination and degradation. Component of the SCF(FBXW7) complex consisting of CUL1, RBX1, SKP1 and FBXW7. Interacts (via F-box domain) with SKP1. Interacts (via F-box domain) with pseudophosphatase STYX; the interaction is direct and prevents FBXW7 interaction with SKP1. Interacts with cyclin-E (CCNE1 or CCNE2). Interacts with PSEN1. Forms a trimeric complex with NOTCH1 and SGK1. Interacts with NOTCH1 intracellular domain/NICD and NOTCH4 intracellular domain/NICD. Interacts with NOTCH2 intracellular domain (N2ICD). Interacts with MYC (when phosphorylated). Interacts with USP28, counteracting ubiquitination of MYC. Interacts with JUN. Found in a complex with JUN and PRR7. Interacts with JUN and PRR7; the interaction inhibits ubiquitination-mediated JUN degradation, promoting its phosphorylation and transcriptional activity. Interacts (when phosphorylated at Thr-205) with PIN1, disrupting FBXW7 dimerization and promoting FBXW7 autoubiquitination and degradation. Interacts with UBE2QL1. Interacts with FAM83D; promotes FBXW7 degradation. Interacts with MYCN; FBXW7 competes with AURKA for binding to unphosphorylated MYCN but not for binding to phosphorylated MYCN. Interacts with STOML1. Interacts with NFE2L1. Interacts with USP36, counteracting ubiquitination of MYC. Interacts with NR1D1. Interacts with RICTOR; mediates RICTOR ubiquitination and degradation. Interacts with USP38, counteracting ubiquitination of MYC. (Microbial infection) Interacts (via WD repeats) with SV40 large T antigen (via CPD region). In terms of processing, phosphorylation at Thr-205 promotes interaction with PIN1, leading to disrupt FBXW7 dimerization and promoting FBXW7 autoubiquitination and degradation. Phosphorylated by ATM at Ser-26 in response to DNA damage, promoting recruitment to DNA damage sites and 'Lys-63'-linked ubiquitination of phosphorylated XRCC4. Post-translationally, ubiquitinated: autoubiquitinates following phosphorylation at Thr-205 and subsequent interaction with PIN1. Ubiquitination leads to its proteasomal degradation. As to expression, widely expressed. In terms of tissue distribution, expressed in brain.

The protein resides in the nucleus. It localises to the nucleoplasm. Its subcellular location is the chromosome. The protein localises to the cytoplasm. It is found in the nucleolus. It participates in protein modification; protein ubiquitination. Substrate recognition component of a SCF (SKP1-CUL1-F-box protein) E3 ubiquitin-protein ligase complex which mediates the ubiquitination and subsequent proteasomal degradation of target proteins. Recognizes and binds phosphorylated sites/phosphodegrons within target proteins and thereafter brings them to the SCF complex for ubiquitination. Identified substrates include cyclin-E (CCNE1 or CCNE2), DISC1, JUN, MYC, NOTCH1 released notch intracellular domain (NICD), NFE2L1, NOTCH2, MCL1, MLST8, RICTOR, and probably PSEN1. Acts as a negative regulator of JNK signaling by binding to phosphorylated JUN and promoting its ubiquitination and subsequent degradation. Involved in bone homeostasis and negative regulation of osteoclast differentiation. Regulates the amplitude of the cyclic expression of hepatic core clock genes and genes involved in lipid and glucose metabolism via ubiquitination and proteasomal degradation of their transcriptional repressor NR1D1; CDK1-dependent phosphorylation of NR1D1 is necessary for SCF(FBXW7)-mediated ubiquitination. Also able to promote 'Lys-63'-linked ubiquitination in response to DNA damage. The SCF(FBXW7) complex facilitates double-strand break repair following phosphorylation by ATM: phosphorylation promotes localization to sites of double-strand breaks and 'Lys-63'-linked ubiquitination of phosphorylated XRCC4, enhancing DNA non-homologous end joining. The polypeptide is F-box/WD repeat-containing protein 7 (Homo sapiens (Human)).